We begin with the raw amino-acid sequence, 296 residues long: tRNA (guanine(9)-N1)-methyltransferase (296 aa).

The disordered stretch occupies residues 1-33 (MTPETNNDETLSRPKPRAALPPVPEGMSKSQWK). An SAM-dependent MTase TRM10-type domain is found at 85–274 (TPRVNVNQKD…SVLPARKLAE (190 aa)). Residues 181-182 (LT), glycine 201, 205-209 (DKNRH), cysteine 213, leucine 227, and 239-241 (KVL) each bind S-adenosyl-L-methionine. Catalysis depends on aspartate 205, which acts as the Proton acceptor. Residues 277-296 (DHAQESNSSSPAEEQDAQDI) form a disordered region.

The protein belongs to the class IV-like SAM-binding methyltransferase superfamily. TRM10 family. As to quaternary structure, monomer.

The protein resides in the cytoplasm. It is found in the nucleus. It catalyses the reaction guanosine(9) in tRNA + S-adenosyl-L-methionine = N(1)-methylguanosine(9) in tRNA + S-adenosyl-L-homocysteine + H(+). Its function is as follows. S-adenosyl-L-methionine-dependent guanine N(1)-methyltransferase that catalyzes the formation of N(1)-methylguanine at position 9 (m1G9) in cytoplasmic tRNA. In Eremothecium gossypii (strain ATCC 10895 / CBS 109.51 / FGSC 9923 / NRRL Y-1056) (Yeast), this protein is tRNA (guanine(9)-N1)-methyltransferase.